We begin with the raw amino-acid sequence, 204 residues long: Somatotropin (204 aa).

A signal peptide spans 1-17 (MDRVVLMLSVLSLGVSS). At Gln-18 the chain carries Pyrrolidone carboxylic acid. Position 36 (His-36) interacts with Zn(2+). A disulfide bridge links Cys-69 with Cys-177. Glu-186 lines the Zn(2+) pocket. Cys-194 and Cys-202 are disulfide-bonded.

This sequence belongs to the somatotropin/prolactin family.

It localises to the secreted. Its function is as follows. Growth hormone plays an important role in growth control and is involved in the regulation of several anabolic processes. Implicated as an osmoregulatory substance important for seawater adaptation. The polypeptide is Somatotropin (gh) (Acanthopagrus latus (Yellowfin seabream)).